The sequence spans 474 residues: tRNA-2-methylthio-N(6)-dimethylallyladenosine synthase (474 aa).

Positions 3-120 constitute an MTTase N-terminal domain; the sequence is KKLHIKTWGC…LPEMINSVRG (118 aa). C12, C49, C83, C157, C161, and C164 together coordinate [4Fe-4S] cluster. In terms of domain architecture, Radical SAM core spans 143 to 375; it reads RAEGPTAFVS…QERINQQAMA (233 aa). The TRAM domain maps to 378 to 441; it reads RRMLGTTQRI…PNSLRGKVVR (64 aa).

This sequence belongs to the methylthiotransferase family. MiaB subfamily. Monomer. [4Fe-4S] cluster serves as cofactor.

The protein resides in the cytoplasm. It catalyses the reaction N(6)-dimethylallyladenosine(37) in tRNA + (sulfur carrier)-SH + AH2 + 2 S-adenosyl-L-methionine = 2-methylsulfanyl-N(6)-dimethylallyladenosine(37) in tRNA + (sulfur carrier)-H + 5'-deoxyadenosine + L-methionine + A + S-adenosyl-L-homocysteine + 2 H(+). Catalyzes the methylthiolation of N6-(dimethylallyl)adenosine (i(6)A), leading to the formation of 2-methylthio-N6-(dimethylallyl)adenosine (ms(2)i(6)A) at position 37 in tRNAs that read codons beginning with uridine. The protein is tRNA-2-methylthio-N(6)-dimethylallyladenosine synthase of Escherichia coli O81 (strain ED1a).